The sequence spans 284 residues: Pantothenate synthetase (284 aa).

Residue 30–37 participates in ATP binding; that stretch reads MGNLHNAH. His-37 acts as the Proton donor in catalysis. Gln-61 lines the (R)-pantoate pocket. Position 61 (Gln-61) interacts with beta-alanine. 149 to 152 contacts ATP; sequence GIKD. Gln-155 serves as a coordination point for (R)-pantoate. Residues Val-178 and 186 to 189 contribute to the ATP site; that span reads MSSR.

This sequence belongs to the pantothenate synthetase family. In terms of assembly, homodimer.

It is found in the cytoplasm. It catalyses the reaction (R)-pantoate + beta-alanine + ATP = (R)-pantothenate + AMP + diphosphate + H(+). Its pathway is cofactor biosynthesis; (R)-pantothenate biosynthesis; (R)-pantothenate from (R)-pantoate and beta-alanine: step 1/1. In terms of biological role, catalyzes the condensation of pantoate with beta-alanine in an ATP-dependent reaction via a pantoyl-adenylate intermediate. The protein is Pantothenate synthetase of Saccharophagus degradans (strain 2-40 / ATCC 43961 / DSM 17024).